Reading from the N-terminus, the 159-residue chain is Probable deoxyuridine 5'-triphosphate nucleotidohydrolase (159 aa).

The protein belongs to the dCTP deaminase family. Archaeal dUTPase subfamily.

It carries out the reaction dUTP + H2O = dUMP + diphosphate + H(+). The protein operates within pyrimidine metabolism; dUMP biosynthesis; dUMP from dCTP (dUTP route): step 2/2. This enzyme is involved in nucleotide metabolism: it produces dUMP, the immediate precursor of thymidine nucleotides and it decreases the intracellular concentration of dUTP so that uracil cannot be incorporated into DNA. The sequence is that of Probable deoxyuridine 5'-triphosphate nucleotidohydrolase from Aeropyrum pernix (strain ATCC 700893 / DSM 11879 / JCM 9820 / NBRC 100138 / K1).